The following is a 411-amino-acid chain: Imidazolonepropionase (411 aa).

His-78 and His-80 together coordinate Fe(3+). Zn(2+) contacts are provided by His-78 and His-80. 4-imidazolone-5-propanoate is bound by residues Arg-87, Tyr-150, and His-183. Tyr-150 is an N-formimidoyl-L-glutamate binding site. His-248 lines the Fe(3+) pocket. Residue His-248 coordinates Zn(2+). Gln-251 is a 4-imidazolone-5-propanoate binding site. Asp-322 lines the Fe(3+) pocket. Position 322 (Asp-322) interacts with Zn(2+). Residues Asn-324 and Gly-326 each coordinate N-formimidoyl-L-glutamate. Residue Ser-327 participates in 4-imidazolone-5-propanoate binding.

It belongs to the metallo-dependent hydrolases superfamily. HutI family. Requires Zn(2+) as cofactor. Fe(3+) serves as cofactor.

The protein resides in the cytoplasm. It carries out the reaction 4-imidazolone-5-propanoate + H2O = N-formimidoyl-L-glutamate. Its pathway is amino-acid degradation; L-histidine degradation into L-glutamate; N-formimidoyl-L-glutamate from L-histidine: step 3/3. Its function is as follows. Catalyzes the hydrolytic cleavage of the carbon-nitrogen bond in imidazolone-5-propanoate to yield N-formimidoyl-L-glutamate. It is the third step in the universal histidine degradation pathway. This Christiangramia forsetii (strain DSM 17595 / CGMCC 1.15422 / KT0803) (Gramella forsetii) protein is Imidazolonepropionase.